The following is a 741-amino-acid chain: uncharacterized protein (741 aa).

The first 18 residues, 1-18 (MKTISILAFLVLARLIEA), serve as a signal peptide directing secretion. Disordered stretches follow at residues 142–300 (PKVE…GNVD), 423–528 (EEDE…SEQG), and 646–681 (ETVA…VEDD). The segment covering 147 to 165 (EEEEEEYDGEEDDDDESLT) has biased composition (acidic residues). Composition is skewed to low complexity over residues 183–197 (VEPS…STTE) and 205–266 (STTV…SSTT). 2 N-linked (GlcNAc...) asparagine glycosylation sites follow: Asn-232 and Asn-241. The span at 423-432 (EEDEIDETET) shows a compositional bias: acidic residues. The span at 433–451 (TESTKTTETTKTTGPAETT) shows a compositional bias: low complexity. 2 N-linked (GlcNAc...) asparagine glycosylation sites follow: Asn-461 and Asn-511. Positions 500–511 (PIDESTESEEPN) are enriched in acidic residues. A compositionally biased stretch (low complexity) spans 512-528 (ESVTVTGDTTTDTSEQG). Residues 646–656 (ETVAPDTNSPD) are compositionally biased toward polar residues. Residues 657–671 (ADQEQPDSVEPDNET) are compositionally biased toward acidic residues. Residue Asn-669 is glycosylated (N-linked (GlcNAc...) asparagine). Asn-719 is lipidated: GPI-anchor amidated asparagine. Residues 720 to 741 (AANLAGSISLSSGVLLLILMLI) constitute a propeptide, removed in mature form.

Its subcellular location is the cell membrane. This is an uncharacterized protein from Candida albicans (strain SC5314 / ATCC MYA-2876) (Yeast).